The chain runs to 386 residues: DNA dC-&gt;dU-editing enzyme APOBEC-3D (386 aa).

CMP/dCMP-type deaminase domains follow at residues 29 to 145 and 187 to 334; these read GRSY…DWRW and DDNY…LCSL. 4 residues coordinate Zn(2+): H78, C109, C112, and H262. The active-site Proton donor is E264. Zn(2+) contacts are provided by C293 and C296.

It belongs to the cytidine and deoxycytidylate deaminase family. As to quaternary structure, can form homo- and heterodimers with APOBEC3F and APOBEC3G. Interacts with L1RE1; this interaction inhibits LINE-1 retrotransposition. (Microbial infection) Interacts with HIV-1 Vif. This interaction triggers APOBEC3D polyubiquitylation and degradation by the 26S proteasome. Zn(2+) is required as a cofactor. In terms of tissue distribution, expressed in lymphoid organs. Also detected in non-lymphoid tissues including lung.

Its subcellular location is the cytoplasm. It is found in the P-body. The enzyme catalyses a 2'-deoxycytidine in single-stranded DNA + H2O + H(+) = a 2'-deoxyuridine in single-stranded DNA + NH4(+). Its activity is regulated as follows. (Microbial infection) Antiviral activity is neutralized by the HIV-1 virion infectivity factor (Vif), that prevents its incorporation into progeny virions by both inhibiting its translation and/or by inducing its ubiquitination and subsequent degradation by the 26S proteasome. DNA deaminase (cytidine deaminase) which acts as an inhibitor of retrovirus replication and retrotransposon mobility via deaminase-dependent and -independent mechanisms. Exhibits antiviral activity against HIV-1. After the penetration of retroviral nucleocapsids into target cells of infection and the initiation of reverse transcription, it can induce the conversion of cytosine to uracil in the minus-sense single-strand viral DNA, leading to G-to-A hypermutations in the subsequent plus-strand viral DNA. The resultant detrimental levels of mutations in the proviral genome, along with a deamination-independent mechanism that works prior to the proviral integration, together exert efficient antiretroviral effects in infected target cells. Selectively targets single-stranded DNA and does not deaminate double-stranded DNA or single- or double-stranded RNA. Also inhibits the mobility of LTR and non-LTR retrotransposons. In terms of biological role, (Microbial infection) Enhances hepatitis B virus/HBV replication by excluding restriction factors APOBEC3F and APOBEC3G from HBV capsids. The polypeptide is DNA dC-&gt;dU-editing enzyme APOBEC-3D (Homo sapiens (Human)).